A 1668-amino-acid chain; its full sequence is Chitin synthase chs-2 (1668 aa).

The span at 1-19 (MMNTLDHRPLGRMETMEGK) shows a compositional bias: basic and acidic residues. The interval 1-51 (MMNTLDHRPLGRMETMEGKPDEDEVPTSSNSDAKGKGYYYSSGTVPTDDST) is disordered. Topologically, residues 1–116 (MMNTLDHRPL…HGFWHDASLQ (116 aa)) are cytoplasmic. The chain crosses the membrane as a helical span at residues 117–137 (VLKLATFLVLFLLTLGSAVVA). Residues 138 to 176 (KSTFILMTSAIGWGGQTITICNQVISEATQNTVKLKNAH) lie on the Extracellular side of the membrane. Residues 177–197 (VVKWVWATLLALSAPEALCFV) form a helical membrane-spanning segment. Residues 198 to 212 (RSMHRTMFRNVKRPT) lie on the Cytoplasmic side of the membrane. The helical transmembrane segment at 213–233 (FIQFVFVLIIETFHSIGVGIL) threads the bilayer. At 234-242 (VFRIFPDLD) the chain is on the extracellular side. Residues 243-263 (AVTAAQLTNAMCFVPAILSVI) traverse the membrane as a helical segment. At 264 to 271 (SRKPNKSA) the chain is on the cytoplasmic side. A helical transmembrane segment spans residues 272–292 (LLLVIIDFAAIAAQSSGFWAL). Topologically, residues 293 to 301 (PMFLPNLQK) are extracellular. The chain crosses the membrane as a helical span at residues 302-322 (HLVAIPVSLTLISLAWWQNFV). The Cytoplasmic portion of the chain corresponds to 323-347 (HRDSVFPPVRTLAKFAQRLSERRSK). The helical transmembrane segment at 348–368 (TYAFVSLWKICIYVVCCFLFI) threads the bilayer. Topologically, residues 369–487 (SSRMKIEDML…IYSNYVERNQ (119 aa)) are extracellular. N396 carries N-linked (GlcNAc...) asparagine glycosylation. The chain crosses the membrane as a helical span at residues 488-508 (LTMAYDALWLVIFQFGAVFVC). Over 509 to 522 (YHSSKFACKVMMQR) the chain is Cytoplasmic. A helical membrane pass occupies residues 523 to 543 (MGFALPMALSVPVTVLLLSTN). The Extracellular segment spans residues 544-576 (CRMRQKDSCYGTNVLTVELFWQCNGASMSLADF). Residues 577–597 (ILTPQTWIWLCWLASQFWITI) traverse the membrane as a helical segment. At 598–1045 (HLWNPKHERL…ISIWYIIYQL (448 aa)) the chain is on the cytoplasmic side. A helical membrane pass occupies residues 1046–1066 (VMLISSILGPGTIFVMIIGAI). The Extracellular segment spans residues 1067-1074 (SISFSIDT). A helical membrane pass occupies residues 1075 to 1095 (LISLVIVSIPVVVFIVVCLTA). Residues 1096 to 1100 (KPEHQ) lie on the Cytoplasmic side of the membrane. Residues 1101–1121 (LICAQTIGAIFAMLMTAVVVG) traverse the membrane as a helical segment. The Extracellular segment spans residues 1122–1136 (TSLQLQKDGLLSPHS). Residues 1137–1157 (MFTVAVATSFLTAAILHPLEF) form a helical membrane-spanning segment. T1158 is a topological domain (cytoplasmic). A helical membrane pass occupies residues 1159–1179 (CIIPGTIYFLAIPCMYMLLPI). The Extracellular portion of the chain corresponds to 1180–1375 (YSVCNMHTVS…RAGLIAIRNS (196 aa)). The tract at residues 1192–1216 (TREDPRPTEKNTLAKKTPGNLESGD) is disordered. A coiled-coil region spans residues 1280–1335 (QIDKCSEADEDEQAEIEDALEMSNQSHAAKKNQKWKQAQSEAWLADKALKRAEREY). Residue N1303 is glycosylated (N-linked (GlcNAc...) asparagine). The chain crosses the membrane as a helical span at residues 1376–1396 (HTVYFLMINIVFIISVLVLQI). Residues 1397–1440 (HKDCLNIEWPLGPKFNHTVRPCYANHDDNQKEEVWVMTRLQLEP) are Cytoplasmic-facing. The chain crosses the membrane as a helical span at residues 1441 to 1461 (IGLVFLIFFVSILVIQFLAML). Residues 1462–1668 (CHRFGTLAHI…SSGDVELRRF (207 aa)) are Extracellular-facing. Residues 1625–1668 (RLFTAQQDQNSPTSDGNRRKSNSRPWDQPTSSATSSGDVELRRF) are disordered. Composition is skewed to polar residues over residues 1628–1639 (TAQQDQNSPTSD) and 1647–1661 (SRPW…TSSG).

This sequence belongs to the chitin synthase family. Class IV subfamily.

The protein localises to the cell membrane. The enzyme catalyses [(1-&gt;4)-N-acetyl-beta-D-glucosaminyl](n) + UDP-N-acetyl-alpha-D-glucosamine = [(1-&gt;4)-N-acetyl-beta-D-glucosaminyl](n+1) + UDP + H(+). Functionally, may be involved in chitin synthesis in the pharynx during larval development. The polypeptide is Chitin synthase chs-2 (Caenorhabditis elegans).